Reading from the N-terminus, the 585-residue chain is MASPGSGFWSFGSEDGSGDPENPGTARAWCQVAQKFTGGIGNKLCALLYGDSEKPAESGGSVTSRAATRKVACTCDQKPCSCPKGDVNYALLHATDLLPACEGERPTLAFLQDVMNILLQYVVKSFDRSTKVIDFHYPNELLQEYNWELADQPQNLEEILTHCQTTLKYAIKTGHPRYFNQLSTGLDMVGLAADWLTSTANTNMFTYEIAPVFVLLEYVTLKKMREIIGWPGGSGDGIFSPGGAISNMYAMLIARYKMFPEVKEKGMAAVPRLIAFTSEHSHFSLKKGAAALGIGTDSVILIKCDERGKMIPSDLERRILEVKQKGFVPFLVSATAGTTVYGAFDPLLAVADICKKYKIWMHVDAAWGGGLLMSRKHKWKLNGVERANSVTWNPHKMMGVPLQCSALLVREEGLMQSCNQMHASYLFQQDKHYDLSYDTGDKALQCGRHVDVFKLWLMWRAKGTTGFEAHIDKCLELAEYLYNIIKNREGYEMVFDGKPQHTNVCFWFVPPSLRVLEDNEERMSRLSKVAPVIKARMMEYGTTMVSYQPLGDKVNFFRMVISNPAATHQDIDFLIEEIERLGQDL.

The tract at residues 1-25 (MASPGSGFWSFGSEDGSGDPENPGT) is disordered. A phosphoserine mark is found at S3, S6, S10, S13, and S17. 2 S-palmitoyl cysteine lipidation sites follow: C30 and C45. Substrate is bound at residue 181–183 (QLS). Position 396 is an N6-(pyridoxal phosphate)lysine (K396). A substrate-binding site is contributed by R558.

The protein belongs to the group II decarboxylase family. Homodimer. The cofactor is pyridoxal 5'-phosphate. In terms of processing, the N-terminus is blocked. Phosphorylated; which does not affect kinetic parameters or subcellular location. Post-translationally, palmitoylated; which is required for presynaptic clustering.

It localises to the cytoplasm. It is found in the cytosol. Its subcellular location is the cytoplasmic vesicle. The protein localises to the presynaptic cell membrane. The protein resides in the golgi apparatus membrane. The catalysed reaction is L-glutamate + H(+) = 4-aminobutanoate + CO2. Functionally, catalyzes the production of GABA. The sequence is that of Glutamate decarboxylase 2 (Gad2) from Rattus norvegicus (Rat).